Here is a 1129-residue protein sequence, read N- to C-terminus: MEIETDQSIEAMDTQDTQEVEILTSDLQQTQQQRNSPPQLPKFKNLIQPQLHAVGAVTQLPSENGNMPPQQLLADSSSTSFGDGEAMGIDDESKEDQFRSETTFSFTVENVVQLKSQRLSPPVYVRMLPWRIMVIPNDRALGFFLQCNGENDSPTWSCNAIAELRLKCHKPDAQPFTRARIKHLFYSKENDYGYSNFITWQELKDSEKSYVHNNSITLEVHVVADAPHGVLWDSKKHTGYVGLKNQGATCYMNSLLQTLYFTNSLRLSVYRIPTEADDSSKSVGLSLQRVFHELQFGDRPVGTKKLTKSFGWETLDSFMQHDVQEFLRVLLDKLESKMKGTILEGTIPGLFEGKMSSYIKCKNVDYNSTRYETFYDIQLNIKDKKNIYESFQDYVAPETLEGDNKYDAGVHGLQEASKGVIFTSFPPVLHLHLMRFQYDPVTDSSIKYNDRFEFYEHINLDRYLAESENTLADYVLHAVLVHSGDNHGGHYVVFINPKADGRWFKFDDDVVSSCRKQEAIEQNYGGMDDEISFHAKCSNAYMLVYIRQSELDRVLGDITESEISSDLVERLDLEKRIEMARRKERGEANTYVSVHVILEENFEEQHKRRLFDLEKVHPRVFRIKQNQTVDELVDLFVRGFGVSRQRMRMWNLCTAQTQKFSHFDFVAEGSRTIEQISTSQKPWVIWLQLAWTDVPGPLPPFNPKTESLLFLKYYDPRNKRLNYIGCTQQPHTRRLIDLVPDVNSKLGFEPDTELTIYDEYADKKLVNLNEPIESALFIPQDHLQGHILIFERENVDAKLDLPTVGDYFLDLVYRIEIIFSDKCNPNEPDFTLELSNRYNYDQLANAVAERLNTDPQKLQFFMCINNYKETAGNAVPYTFKGTIKDLVSYTKQSSTKRIFYQRLSLSIHELDNKKQFKCVWVSSDLKDEKELVLYPNKNDTVKGLLEEAAKKISFAENSRRKLRLLKISNHKIVAVCKDDIPLDTLLKSNESITTAQGAQKTFRIEEVPAEDMQLAENEFLIPVAHFSKELYNSFGIPFLTKARQGEPYGALKQRIQRRLNVQDKEWENYKFCVISMGHNADVNDNTPVDLEVYRSWTSGQLPFFGLDHINKSRKRSSLNFSEKAIKIYN.

The tract at residues 1 to 20 (MEIETDQSIEAMDTQDTQEV) is disordered. The 122-residue stretch at 101 to 222 (ETTFSFTVEN…NNSITLEVHV (122 aa)) folds into the MATH domain. The 308-residue stretch at 241 to 548 (VGLKNQGATC…NAYMLVYIRQ (308 aa)) folds into the USP domain. The active-site Nucleophile is C250. H490 functions as the Proton acceptor in the catalytic mechanism. S1117 bears the Phosphoserine mark.

The protein belongs to the peptidase C19 family.

It localises to the nucleus. The enzyme catalyses Thiol-dependent hydrolysis of ester, thioester, amide, peptide and isopeptide bonds formed by the C-terminal Gly of ubiquitin (a 76-residue protein attached to proteins as an intracellular targeting signal).. Functionally, hydrolase that deubiquitinates target proteins. The polypeptide is Ubiquitin carboxyl-terminal hydrolase 7 (Usp7) (Drosophila melanogaster (Fruit fly)).